Reading from the N-terminus, the 729-residue chain is Serine/threonine-protein kinase TBK1 (729 aa).

The Protein kinase domain maps to 9 to 310 (WLLSDILGQG…ETSDVLHRMV (302 aa)). 15-23 (LGQGATANV) contributes to the ATP binding site. K30 participates in a covalent cross-link: Glycyl lysine isopeptide (Lys-Gly) (interchain with G-Cter in ubiquitin). K38 is a binding site for ATP. D135 acts as the Proton acceptor in catalysis. Phosphoserine; by autocatalysis and IKKB is present on S172. The Ubiquitin-like domain occupies 309–385 (MVIHVFSLQH…ENPIFVTSRE (77 aa)). A Glycyl lysine isopeptide (Lys-Gly) (interchain with G-Cter in ubiquitin) cross-link involves residue K401. Coiled coils occupy residues 407-657 (DLDG…LQET) and 658-713 (LPQK…ILER). An interaction with AZI2, TANK and TBKBP1 region spans residues 621–729 (RKMLHLRKQL…DGGLRNVDCL (109 aa)). K670 is covalently cross-linked (Glycyl lysine isopeptide (Lys-Gly) (interchain with G-Cter in ubiquitin)). S716 is modified (phosphoserine).

The protein belongs to the protein kinase superfamily. Ser/Thr protein kinase family. I-kappa-B kinase subfamily. In terms of assembly, homodimer. Interacts with DDX3X, TIRAP and TRAF2. Part of a ternary complex consisting of TANK, TRAF2 and TBK1. Interacts with AZI2, TANK and TBKBP1; these interactions are mutually exclusive and mediate TBK1 activation. Interacts with GSK3B; this interaction promotes TBK1 self-association and autophosphorylation. Interacts with SIKE1; SIKE1 is associated with TBK1 under physiological condition and dissociated from TBK1 upon viral infection or TLR3 stimulation. Interacts with IRF3, leading to IRF3 phosphorylation. Interacts with RIGI. Interacts with CYLD. Interacts with OPTN and TRAF3. Interacts with SRC. Interacts with the exocyst complex subunit SEC5/EXOC2; this interaction is sufficient to trigger TBK1 activity. Interacts with STING1, leading to STING1 phosphorylation. Interacts with IFIT3 (via N-terminus). Interacts with MAVS; interaction only takes place in the presence of IFIT3 and leads to MAVS phosphorylation. Interacts (via protein kinase domain) with TTLL12 (via TTL domain); the interaction prevents MAVS binding to TBK1. Interacts with TICAM1; this interaction is enhanced in the presence of WDFY1 and leads to TICAM1 phosphorylation. Interacts with TRIM26. Interacts with TRIM23. Interacts with TTC4 and IKBKE. Interacts with HNRNPA2B1. Interacts with DDX3X. Interacts with TRIM14. Interacts with CEP170; efficient complex formation may be dependent on the presence of CCDC61. Interacts with TRAF3IP3. Interacts with HSP90AA1; the interaction mediates TBK1 association with TOMM70. Interacts with TAX1BP1. Interacts with kinase IKBKB; the complex interacts with STAT1, leading to phosphorylation of STAT1 on 'Thr-748' by IKBKB. Interacts with ICOS; this interaction is critical for the maturation of T follicular regulatory cells. Interacts with RNF144B; this interaction prevents TBK1 phosphorylation and subsequent activation. Interacts with ASB8; this interaction promotes TBK1 proteasomal degradation. In terms of processing, autophosphorylation at Ser-172 activates the kinase, and is an essential step for virus-triggered signaling. Phosphorylated by IKBKB/IKKB at Ser-172. Phosphorylation requires homodimerization and ubiquitination at Lys-30 and Lys-401. Dephosphorylated at Ser-172 by PPM1B and this negatively regulates its role in mediating antiviral response. 'Lys-63'-linked polyubiquitination by MIB1 after RNA virus infection, or by NRDP1 after LPS stimulation at Lys-30 and Lys-401, participates in kinase activation. 'Lys-48'-linked polyubiquitination at Lys-670 by DTX4 leads to proteasomal degradation. 'Lys-48'-linked polyubiquitination by TRAIP also leads to proteasomal degradation. 'Lys-48'-linked polyubiquitination by TRAF7; leading to proteasomal degradation. 'Lys-63'-linked polyubiquitination by RNF128 at Lys-30 and Lys-401 leads to the activation of antiviral responses. 'Lys-48'-linked polyubiquitination after 'lys-33'-linked deubiquitination by USP38 promotes TBK1 degradation.

The protein resides in the cytoplasm. It catalyses the reaction L-seryl-[protein] + ATP = O-phospho-L-seryl-[protein] + ADP + H(+). It carries out the reaction L-threonyl-[protein] + ATP = O-phospho-L-threonyl-[protein] + ADP + H(+). Its activity is regulated as follows. Kinase activity is inhibited competitively by amlexanox. Its function is as follows. Serine/threonine kinase that plays an essential role in regulating inflammatory responses to foreign agents. Following activation of toll-like receptors by viral or bacterial components, associates with TRAF3 and TANK and phosphorylates interferon regulatory factors (IRFs) IRF3 and IRF7 as well as DDX3X. This activity allows subsequent homodimerization and nuclear translocation of the IRFs leading to transcriptional activation of pro-inflammatory and antiviral genes including IFNA and IFNB. In order to establish such an antiviral state, TBK1 form several different complexes whose composition depends on the type of cell and cellular stimuli. Thus, several scaffolding molecules including FADD, TRADD, MAVS, AZI2, TANK or TBKBP1/SINTBAD can be recruited to the TBK1-containing-complexes. Plays a key role in IRF3 activation: acts by first phosphorylating innate adapter proteins MAVS, STING1 and TICAM1 on their pLxIS motif, leading to recruitment of IRF3, thereby licensing IRF3 for phosphorylation by TBK1. Under particular conditions, functions as a NF-kappa-B effector by phosphorylating NF-kappa-B inhibitor alpha/NFKBIA, IKBKB or RELA to translocate NF-Kappa-B to the nucleus. Restricts bacterial proliferation by phosphorylating the autophagy receptor OPTN/Optineurin on 'Ser-177', thus enhancing LC3 binding affinity and antibacterial autophagy. Phosphorylates SMCR8 component of the C9orf72-SMCR8 complex, promoting autophagosome maturation. Phosphorylates ATG8 proteins MAP1LC3C and GABARAPL2, thereby preventing their delipidation and premature removal from nascent autophagosomes. Seems to play a role in energy balance regulation by sustaining a state of chronic, low-grade inflammation in obesity, which leads to a negative impact on insulin sensitivity. Acts both as a positive and negative regulator of the mTORC1 complex, depending on the context: activates mTORC1 in response to growth factors by catalyzing phosphorylation of MTOR, while it limits the mTORC1 complex by promoting phosphorylation of RPTOR. Acts as a positive regulator of the mTORC2 complex by mediating phosphorylation of MTOR, leading to increased phosphorylation and activation of AKT1. Phosphorylates and activates AKT1. Involved in the regulation of TNF-induced RIPK1-mediated cell death, probably acting via CYLD phosphorylation that in turn controls RIPK1 ubiquitination status. Also participates in the differentiation of T follicular regulatory cells together with the receptor ICOS. The chain is Serine/threonine-protein kinase TBK1 from Mus musculus (Mouse).